The following is a 358-amino-acid chain: MAEFVRAQIFGTTFEITSRYSDLQPVGMGAFGLVCSARDQLTNQNVAVKKIMKPFSTPVLAKRTYRELKLLKHLRHENVISLSDIFISPLEDIYFVTELLGTDLHRLLTSRPLEKQFIQYFLYQIMRGLKYVHSAGVVHRDLKPSNILVNENCDLKICDFGLARIQDPQMTGYVSTRYYRAPEIMLTWQKYDVEVDIWSAGCIFAEMLDGKPLFPGKDHVNQFSIITELLGTPPDDVINTIASENTLRFVKSLPKRERQPLRNKFRNADDSAIDLMERMLVFDPKKRITAAEALSHDYLAPYHDPTDEPVAEEKFDWSFNDADLPVDTWKIMMYSEILDYHNVEAGASGLEDGSVPAQ.

Residues 20–299 form the Protein kinase domain; that stretch reads YSDLQPVGMG…AAEALSHDYL (280 aa). ATP contacts are provided by residues 26 to 34 and Lys49; that span reads VGMGAFGLV. The active-site Proton acceptor is the Asp141. Thr171 carries the post-translational modification Phosphothreonine. Residues 171 to 173 carry the TXY motif; that stretch reads TGY. Phosphotyrosine is present on Tyr173.

Belongs to the protein kinase superfamily. Ser/Thr protein kinase family. MAP kinase subfamily. HOG1 sub-subfamily. Mg(2+) serves as cofactor. Dually phosphorylated on Thr-171 and Tyr-173, which activates the enzyme.

It localises to the cytoplasm. The protein resides in the nucleus. The catalysed reaction is L-seryl-[protein] + ATP = O-phospho-L-seryl-[protein] + ADP + H(+). It catalyses the reaction L-threonyl-[protein] + ATP = O-phospho-L-threonyl-[protein] + ADP + H(+). Its activity is regulated as follows. Activated by tyrosine and threonine phosphorylation. Its function is as follows. Proline-directed serine/threonine-protein kinase involved in a signal transduction pathway that is activated by changes in the osmolarity of the extracellular environment. Controls osmotic regulation of transcription of target genes. This is Mitogen-activated protein kinase HOG1 (HOG1) from Beauveria bassiana (White muscardine disease fungus).